A 351-amino-acid chain; its full sequence is Histidinol-phosphate aminotransferase (351 aa).

An N6-(pyridoxal phosphate)lysine modification is found at Lys-213.

This sequence belongs to the class-II pyridoxal-phosphate-dependent aminotransferase family. Histidinol-phosphate aminotransferase subfamily. In terms of assembly, homodimer. Pyridoxal 5'-phosphate serves as cofactor.

It catalyses the reaction L-histidinol phosphate + 2-oxoglutarate = 3-(imidazol-4-yl)-2-oxopropyl phosphate + L-glutamate. It participates in amino-acid biosynthesis; L-histidine biosynthesis; L-histidine from 5-phospho-alpha-D-ribose 1-diphosphate: step 7/9. This Thermoanaerobacter pseudethanolicus (strain ATCC 33223 / 39E) (Clostridium thermohydrosulfuricum) protein is Histidinol-phosphate aminotransferase.